Reading from the N-terminus, the 600-residue chain is MSSISMHARPLNISAANNHHPSWDRRVSKPRRVAAKHLRLRLSCSLQLDGKPLDETRRSANYQPSAWDFNFIQSLHNQYKEDKYVTRHTELTAQVKMLLEEETDAVQQLDLIEDLKNLGINYLFKDKIQQILNHIYNQHRCFQNNQVEGNDLYFTALGFRLLRQHGFEVSQEVFDRFTNEEGTDFNPSLIDDTKGLLQLYEASFLLREGEDTLELARQFSTKLLQKKVDEDGDREVGDNLLVWIRHSLELPLHWRIHRIEARWFLDAYATRHDMNPIIFELAKLDFNITQATQQEELRDLSRWWNSAGLVEKLSFARDRVVESYFWAIGTLEPRQYGYQRKLVAKIIALISVVDDVYDIYGTLDELKLFTDVMRRWDAESFDQLPYYMKICYLIINNFIFELAYDILKDKGFNSLSYLQRSWLDVVEGYFTEAKWYYSGYTPNLEEYLKNAKITVTCPMILSQIYFTIASSIEKPELESMYKYHDILYLSGLLLRLPDDLGTALHELKRGDVPKAMQCYMKEKNVPEKEAREHVRFLIREASKQMNTVSAADCPFPDDFVAAAANLGRVANFVYVDGDGFGDQHSKMLQQIAALMFEPYD.

The segment at 1-26 is disordered; it reads MSSISMHARPLNISAANNHHPSWDRR. Residues 1–31 constitute a chloroplast transit peptide; that stretch reads MSSISMHARPLNISAANNHHPSWDRRVSKPR. Residues Asp354, Asp358, Asp498, and Glu506 each coordinate Mg(2+). The short motif at 354–358 is the DDXXD motif element; that stretch reads DDVYD.

Belongs to the terpene synthase family. Tpsa subfamily. The cofactor is Mg(2+). Requires Mn(2+) as cofactor. Barely detectable in leaves.

The protein resides in the plastid. Its subcellular location is the chloroplast. The enzyme catalyses (2E)-geranyl diphosphate = alpha-pinene + diphosphate. The protein operates within secondary metabolite biosynthesis; terpenoid biosynthesis. Monoterpene synthase involved in the biosynthesis of volatile compounds widely used in aromatherapy and folk medicine, and present in culinary herbs. Mediates the conversion of (2E)-geranyl diphosphate (GPP) into alpha-pinene and, as minor compounds, into alpha-phellandrene, limonene and alpha-terpinolene. This Lavandula stoechas (Butterfly lavender) protein is Alpha pinene synthase, chloroplastic.